Reading from the N-terminus, the 118-residue chain is Large ribosomal subunit protein uL18 (118 aa).

Belongs to the universal ribosomal protein uL18 family. Part of the 50S ribosomal subunit; part of the 5S rRNA/L5/L18/L25 subcomplex. Contacts the 5S and 23S rRNAs.

In terms of biological role, this is one of the proteins that bind and probably mediate the attachment of the 5S RNA into the large ribosomal subunit, where it forms part of the central protuberance. The chain is Large ribosomal subunit protein uL18 from Rickettsia conorii (strain ATCC VR-613 / Malish 7).